Consider the following 510-residue polypeptide: Glucose-6-phosphate 1-dehydrogenase (510 aa).

NADP(+) is bound by residues 29–36 (GASGDLAK), Arg-63, and Lys-164. Residues Lys-164, 194–198 (HYLGK), Glu-232, and Asp-251 each bind D-glucose 6-phosphate. His-256 acts as the Proton acceptor in catalysis. Residue Lys-347 coordinates NADP(+). Lys-350 serves as a coordination point for D-glucose 6-phosphate. The NADP(+) site is built by Lys-356, Arg-360, and Arg-382. Gln-384 contributes to the D-glucose 6-phosphate binding site. NADP(+)-binding positions include 390–392 (YIK), 410–412 (DLT), and Arg-477.

This sequence belongs to the glucose-6-phosphate dehydrogenase family.

It catalyses the reaction D-glucose 6-phosphate + NADP(+) = 6-phospho-D-glucono-1,5-lactone + NADPH + H(+). It functions in the pathway carbohydrate degradation; pentose phosphate pathway; D-ribulose 5-phosphate from D-glucose 6-phosphate (oxidative stage): step 1/3. Its function is as follows. Catalyzes the rate-limiting step of the oxidative pentose-phosphate pathway, which represents a route for the dissimilation of carbohydrates besides glycolysis. The main function of this enzyme is to provide reducing power (NADPH) and pentose phosphates for fatty acid and nucleic acid synthesis. The sequence is that of Glucose-6-phosphate 1-dehydrogenase (gsdA) from Aspergillus niger.